An 815-amino-acid polypeptide reads, in one-letter code: Leucine--tRNA ligase (815 aa).

The short motif at 42 to 52 (PYPSGRLHMGH) is the 'HIGH' region element. The short motif at 574–578 (KMSKS) is the 'KMSKS' region element. Lysine 577 contacts ATP.

The protein belongs to the class-I aminoacyl-tRNA synthetase family.

The protein localises to the cytoplasm. It carries out the reaction tRNA(Leu) + L-leucine + ATP = L-leucyl-tRNA(Leu) + AMP + diphosphate. The sequence is that of Leucine--tRNA ligase from Alcanivorax borkumensis (strain ATCC 700651 / DSM 11573 / NCIMB 13689 / SK2).